A 54-amino-acid chain; its full sequence is IVTVDCSDYPKPVCSPENMPVCGSDSKTYSNKCDFCNAVADSNGTLTLSHFGKC.

The Kazal-like domain maps to 4–54 (VDCSDYPKPVCSPENMPVCGSDSKTYSNKCDFCNAVADSNGTLTLSHFGKC). 3 cysteine pairs are disulfide-bonded: Cys-6-Cys-36, Cys-14-Cys-33, and Cys-22-Cys-54. Asn-43 carries an N-linked (GlcNAc...) asparagine glycan.

It localises to the secreted. This is Ovomucoid from Nycticorax nycticorax (Black-crowned night-heron).